The sequence spans 104 residues: T-complex protein 1 subunit zeta (104 aa).

An ADP-binding site is contributed by Gly24. ATP is bound at residue Gly24. A Mg(2+)-binding site is contributed by Asp75. ADP-binding residues include Gly76, Thr78, and Ser79. Positions 76 and 78 each coordinate ATP.

Belongs to the TCP-1 chaperonin family. In terms of assembly, component of the chaperonin-containing T-complex (TRiC), a hexadecamer composed of two identical back-to-back stacked rings enclosing a protein folding chamber. Each ring is made up of eight different subunits: TCP1/CCT1, CCT2, CCT3, CCT4, CCT5, CCT6A/CCT6, CCT7, CCT8. Interacts with PACRG.

The protein localises to the cytoplasm. It carries out the reaction ATP + H2O = ADP + phosphate + H(+). Functionally, component of the chaperonin-containing T-complex (TRiC), a molecular chaperone complex that assists the folding of actin, tubulin and other proteins upon ATP hydrolysis. The TRiC complex mediates the folding of WRAP53/TCAB1, thereby regulating telomere maintenance. The protein is T-complex protein 1 subunit zeta (CCT6) of Sus scrofa (Pig).